The chain runs to 484 residues: Protein nucleotidyltransferase YdiU (484 aa).

The ATP site is built by glycine 81, glycine 83, arginine 84, lysine 103, aspartate 115, glycine 116, arginine 166, and arginine 173. The Proton acceptor role is filled by aspartate 244. The Mg(2+) site is built by asparagine 245 and aspartate 254. Aspartate 254 contributes to the ATP binding site.

Belongs to the SELO family. Requires Mg(2+) as cofactor. The cofactor is Mn(2+).

The enzyme catalyses L-seryl-[protein] + ATP = 3-O-(5'-adenylyl)-L-seryl-[protein] + diphosphate. It carries out the reaction L-threonyl-[protein] + ATP = 3-O-(5'-adenylyl)-L-threonyl-[protein] + diphosphate. The catalysed reaction is L-tyrosyl-[protein] + ATP = O-(5'-adenylyl)-L-tyrosyl-[protein] + diphosphate. It catalyses the reaction L-histidyl-[protein] + UTP = N(tele)-(5'-uridylyl)-L-histidyl-[protein] + diphosphate. The enzyme catalyses L-seryl-[protein] + UTP = O-(5'-uridylyl)-L-seryl-[protein] + diphosphate. It carries out the reaction L-tyrosyl-[protein] + UTP = O-(5'-uridylyl)-L-tyrosyl-[protein] + diphosphate. Nucleotidyltransferase involved in the post-translational modification of proteins. It can catalyze the addition of adenosine monophosphate (AMP) or uridine monophosphate (UMP) to a protein, resulting in modifications known as AMPylation and UMPylation. The protein is Protein nucleotidyltransferase YdiU of Shewanella oneidensis (strain ATCC 700550 / JCM 31522 / CIP 106686 / LMG 19005 / NCIMB 14063 / MR-1).